Here is a 391-residue protein sequence, read N- to C-terminus: MNIHEYQAKQIFAKYGVPTPKGLMAESVKQAVANAETLGGSIWVVKAQIHAGGRGLGGGVKLARSLEEVEQLSKEILGMTLVTHQTGPEGKLVQKLYIEEGADIKEELYLGVVLDRAREMPVIMASTEGGMAIEDVAHNTPEKIIKIAVDPAIGFQGFHGRELVFGLGITDPNEQKKLISFASKLYKLYMENDAEMIEINPLVKTGSGEFLALDGKMGFDDSALGRHPDIEDMRDISEEDADEREAGKYGLSYVSLDGEIGCMVNGAGLAMGTMDTINYMGGTPANFLDVGGKANAETVAKGFEIILKNPKVKAIFVNIFGGIVRCDRIANGILEATKLVDVHVPVIVRLDGTNAEEAAAILRDANIANVIAATDLADGAAKAVAAAAQAK.

Positions 9–245 (KQIFAKYGVP…ISEEDADERE (237 aa)) constitute an ATP-grasp domain. ATP-binding positions include Lys-46, 53–55 (GRG), Glu-99, Ala-102, and Glu-107. The Mg(2+) site is built by Asn-200 and Asp-214. Substrate contacts are provided by residues Asn-265 and 322-324 (GIV).

The protein belongs to the succinate/malate CoA ligase beta subunit family. As to quaternary structure, heterotetramer of two alpha and two beta subunits. Mg(2+) is required as a cofactor.

The enzyme catalyses succinate + ATP + CoA = succinyl-CoA + ADP + phosphate. The catalysed reaction is GTP + succinate + CoA = succinyl-CoA + GDP + phosphate. It functions in the pathway carbohydrate metabolism; tricarboxylic acid cycle; succinate from succinyl-CoA (ligase route): step 1/1. In terms of biological role, succinyl-CoA synthetase functions in the citric acid cycle (TCA), coupling the hydrolysis of succinyl-CoA to the synthesis of either ATP or GTP and thus represents the only step of substrate-level phosphorylation in the TCA. The beta subunit provides nucleotide specificity of the enzyme and binds the substrate succinate, while the binding sites for coenzyme A and phosphate are found in the alpha subunit. The polypeptide is Succinate--CoA ligase [ADP-forming] subunit beta (Sulfurimonas denitrificans (strain ATCC 33889 / DSM 1251) (Thiomicrospira denitrificans (strain ATCC 33889 / DSM 1251))).